Consider the following 321-residue polypeptide: p-hydroxybenzoic acid efflux pump subunit AaeA (321 aa).

Residues 22–42 (VVITLVIVLCAIVAIFRVWAF) form a helical membrane-spanning segment.

It belongs to the membrane fusion protein (MFP) (TC 8.A.1) family.

It localises to the cell inner membrane. Functionally, forms an efflux pump with AaeB. This chain is p-hydroxybenzoic acid efflux pump subunit AaeA, found in Pectobacterium atrosepticum (strain SCRI 1043 / ATCC BAA-672) (Erwinia carotovora subsp. atroseptica).